The following is a 411-amino-acid chain: MATINNNYLKLKAGYLFPEISRRVNAFAEANPDAKIIRLGIGDVTEPLPEACRTAMIKAVEDMGDRNTFKGYGPEQGYAWLREKIAAQDFQARGANIDASEIFISDGSKCDTGNILEIFGHDNLIAVTDPVYPVYVDTNVMVGNTGDANDKGEFEGLVYLPITADNNFTAEIPSKKVDLIYLCFPNNPTGATATKEYLKAWVDYAKANNSIIFFDAAYEAYITDPSIPHSIYEIEGAREVAIEFRSFSKNAGFTGTRCALTVVPKTLTGKAADGSDVELWKLWNRRQSTKFNGVSYIVQRGAEAVYSEEGQAQIKGLVSFYLENAKIIREKLTAAGLSVYGGVNAPYVWVKTPNGLSSWEFFDKLLQTVNVVGTPGSGFGAAGEGYFRISAFNSRENVEEAMKRITKKFKV.

Positions 15 and 42 each coordinate substrate. Pyridoxal 5'-phosphate is bound by residues Tyr-72, 108 to 109, Tyr-132, Asn-187, Tyr-218, and 246 to 248; these read SK and SFS. Substrate-binding residues include Lys-109, Tyr-132, and Asn-187. Residue Lys-249 is modified to N6-(pyridoxal phosphate)lysine. Pyridoxal 5'-phosphate contacts are provided by Arg-257 and Asn-292. 2 residues coordinate substrate: Asn-292 and Arg-388.

It belongs to the class-I pyridoxal-phosphate-dependent aminotransferase family. LL-diaminopimelate aminotransferase subfamily. In terms of assembly, homodimer. It depends on pyridoxal 5'-phosphate as a cofactor.

The catalysed reaction is (2S,6S)-2,6-diaminopimelate + 2-oxoglutarate = (S)-2,3,4,5-tetrahydrodipicolinate + L-glutamate + H2O + H(+). It functions in the pathway amino-acid biosynthesis; L-lysine biosynthesis via DAP pathway; LL-2,6-diaminopimelate from (S)-tetrahydrodipicolinate (aminotransferase route): step 1/1. Its function is as follows. Involved in the synthesis of meso-diaminopimelate (m-DAP or DL-DAP), required for both lysine and peptidoglycan biosynthesis. Catalyzes the direct conversion of tetrahydrodipicolinate to LL-diaminopimelate. In Nostoc punctiforme (strain ATCC 29133 / PCC 73102), this protein is LL-diaminopimelate aminotransferase.